Here is a 397-residue protein sequence, read N- to C-terminus: Phosphoglycerate kinase (397 aa).

Substrate is bound by residues 25–27, R41, 64–67, R118, and R151; these read DLN and HLGR. ATP-binding positions include K202, E324, and 350–353; that span reads GGDT.

This sequence belongs to the phosphoglycerate kinase family. Monomer.

Its subcellular location is the cytoplasm. It carries out the reaction (2R)-3-phosphoglycerate + ATP = (2R)-3-phospho-glyceroyl phosphate + ADP. It functions in the pathway carbohydrate degradation; glycolysis; pyruvate from D-glyceraldehyde 3-phosphate: step 2/5. The polypeptide is Phosphoglycerate kinase (Albidiferax ferrireducens (strain ATCC BAA-621 / DSM 15236 / T118) (Rhodoferax ferrireducens)).